The primary structure comprises 568 residues: ATP-dependent RNA helicase MRH4, mitochondrial (568 aa).

Residues 1-50 constitute a mitochondrion transit peptide; that stretch reads MVSILAIRTFNPLGHFVSTQCVRAYAINSVRAGSKSSSVRAGSKNDTTRA. Residues 36–49 show a composition bias toward polar residues; that stretch reads SSSVRAGSKNDTTR. Positions 36–64 are disordered; sequence SSSVRAGSKNDTTRASSKKNKAGKSKLQL. The Q motif motif lies at 143-150; it reads EIHPSPIQ. Residues 160 to 348 form the Helicase ATP-binding domain; sequence NLMEPKLQVH…TKMFPNAIPL (189 aa). An ATP-binding site is contributed by 173–180; the sequence is AETGSGKT. The DEAD box signature appears at 296-299; that stretch reads DEAD. The Helicase C-terminal domain occupies 379–568; that stretch reads ALAQTLYAIA…TILKKNKALT (190 aa).

It belongs to the DEAD box helicase family. MRH4 subfamily.

It localises to the mitochondrion. It catalyses the reaction ATP + H2O = ADP + phosphate + H(+). Its function is as follows. ATP-binding RNA helicase involved in mitochondrial RNA metabolism. Required for maintenance of mitochondrial DNA. This Candida glabrata (strain ATCC 2001 / BCRC 20586 / JCM 3761 / NBRC 0622 / NRRL Y-65 / CBS 138) (Yeast) protein is ATP-dependent RNA helicase MRH4, mitochondrial (MRH4).